The primary structure comprises 254 residues: Probable membrane transporter protein YjnA (254 aa).

The next 6 membrane-spanning stretches (helical) occupy residues 5-25, 75-95, 105-125, 143-163, 187-207, and 209-229; these read IILM…GGAA, AIGS…FPAF, HALG…LFLD, ALTI…SIGS, IAHA…FGSV, and YMLA…GSHL.

The protein belongs to the 4-toluene sulfonate uptake permease (TSUP) (TC 2.A.102) family.

The protein localises to the cell membrane. This chain is Probable membrane transporter protein YjnA (yjnA), found in Bacillus subtilis (strain 168).